Here is a 443-residue protein sequence, read N- to C-terminus: UPF0597 protein DVU_0440 (443 aa).

This sequence belongs to the UPF0597 family.

In Nitratidesulfovibrio vulgaris (strain ATCC 29579 / DSM 644 / CCUG 34227 / NCIMB 8303 / VKM B-1760 / Hildenborough) (Desulfovibrio vulgaris), this protein is UPF0597 protein DVU_0440.